A 545-amino-acid chain; its full sequence is ATP synthase subunit alpha, mitochondrial (545 aa).

Residues M1 to L35 constitute a mitochondrion transit peptide. S57 and S178 each carry phosphoserine. Residue G206–T213 coordinates ATP.

This sequence belongs to the ATPase alpha/beta chains family. In terms of assembly, F-type ATPases have 2 components, CF(1) - the catalytic core - and CF(0) - the membrane proton channel. CF(1) has five subunits: alpha(3), beta(3), gamma(1), delta(1), epsilon(1). CF(0) has three main subunits: a, b and c.

It localises to the mitochondrion inner membrane. Mitochondrial membrane ATP synthase (F(1)F(0) ATP synthase or Complex V) produces ATP from ADP in the presence of a proton gradient across the membrane which is generated by electron transport complexes of the respiratory chain. F-type ATPases consist of two structural domains, F(1) - containing the extramembraneous catalytic core, and F(0) - containing the membrane proton channel, linked together by a central stalk and a peripheral stalk. During catalysis, ATP synthesis in the catalytic domain of F(1) is coupled via a rotary mechanism of the central stalk subunits to proton translocation. Subunits alpha and beta form the catalytic core in F(1). Rotation of the central stalk against the surrounding alpha(3)beta(3) subunits leads to hydrolysis of ATP in three separate catalytic sites on the beta subunits. Subunit alpha does not bear the catalytic high-affinity ATP-binding sites. This is ATP synthase subunit alpha, mitochondrial (ATP1) from Saccharomyces cerevisiae (strain ATCC 204508 / S288c) (Baker's yeast).